The primary structure comprises 265 residues: Undecaprenyl-diphosphatase (265 aa).

8 helical membrane-spanning segments follow: residues 1 to 21 (MDIF…FLPI), 39 to 59 (QGVG…VLYF), 84 to 104 (ALAW…LALL), 114 to 134 (ASVI…ADWL), 144 to 164 (LNWK…VPGT), 187 to 207 (FSFL…LLEV), 218 to 238 (GFLI…HFFL), and 244 to 264 (VGMW…YAVL).

This sequence belongs to the UppP family.

The protein resides in the cell inner membrane. The catalysed reaction is di-trans,octa-cis-undecaprenyl diphosphate + H2O = di-trans,octa-cis-undecaprenyl phosphate + phosphate + H(+). Catalyzes the dephosphorylation of undecaprenyl diphosphate (UPP). Confers resistance to bacitracin. This chain is Undecaprenyl-diphosphatase, found in Marinobacter nauticus (strain ATCC 700491 / DSM 11845 / VT8) (Marinobacter aquaeolei).